Consider the following 1765-residue polypeptide: RANBP2-like and GRIP domain-containing protein 8 (1765 aa).

Threonine 19 is modified (phosphothreonine). At serine 21 the chain carries Phosphoserine. 3 TPR repeats span residues 26 to 59 (SMKG…QERD), 60 to 93 (PKAH…NPTQ), and 648 to 681 (EDAH…VSYW). Residues 760-804 (GPLYKNGSLRNADSEIKHSTPSPTKYSLSPSKSYKYSPETPPRWT) are disordered. Residues 778–797 (STPSPTKYSLSPSKSYKYSP) show a composition bias toward low complexity. In terms of domain architecture, RanBD1 1 spans 1036–1172 (HFEPVVQMPE…FEECQRLLLD (137 aa)). Disordered regions lie at residues 1216 to 1247 (TEEE…PTLE) and 1306 to 1330 (AKLN…EERD). A compositionally biased stretch (polar residues) spans 1231-1244 (SDTTIKPNAENTGP). Acidic residues predominate over residues 1317 to 1329 (TDEESVVTQEEER). The RanBD1 2 domain maps to 1333–1469 (YFEPVVPLPD…FDEAKTAQEK (137 aa)). Positions 1580-1593 (NNSETSSVAQSGSE) are enriched in polar residues. 2 disordered regions span residues 1580-1621 (NNSE…KNLS) and 1746-1765 (KGKL…RSSG). A compositionally biased stretch (basic and acidic residues) spans 1594-1617 (SKVEPKKCELSKNSDIEQSSDSKV). The GRIP domain maps to 1702 to 1752 (REKSAANLEYLKNVLLQFIFLKPGSERERLLPVINTMLQLSPEEKGKLAAV).

As to quaternary structure, interacts with GTP-bound ARL1.

The polypeptide is RANBP2-like and GRIP domain-containing protein 8 (RGPD8) (Homo sapiens (Human)).